We begin with the raw amino-acid sequence, 382 residues long: MPDKILDDISHRRYNPLTDSWLLVSPHRTKRPWQGQQEGAAVTTLPEYDPKCYLCPGNSRAAGDQNPNYEQTFAFVNDYSAVKEQQPDYEVDQSSDDLESLLLRAQGVKGVCYVLTFSPKHNVTLADMSAKDILPTINHWTRLYANHLSPSNPLSAVAAQLQLPISKEEAPVPKDNYRYMQIFENKGAAMGCSNPHPHCQAWTTSTMPEEPGKELVQMAKYRQQHGRHLLADYIKLELAKEERVVWQNDSFVVVCPWWAIWPFEVLVLPKRHVRALVDLTADERLQLAEAIQEVTRRYDNLFECHFPYSSGIHQAPLDGTPEEIENAYFHMHFYPPLLRSATVKKFLVGFELMAEAQRDITPEQATIRLRACDGELYRNKLS.

Residues C52 and C55 each contribute to the Zn(2+) site. UDP-alpha-D-glucose is bound by residues A61 and 77–78 (ND). H121 contacts Zn(2+). Position 185 (N185) interacts with UDP-alpha-D-glucose. A Zn(2+)-binding site is contributed by H196. The Tele-UMP-histidine intermediate role is filled by H198. Q200 contributes to the UDP-alpha-D-glucose binding site. Residues E214, H313, H330, and H332 each coordinate Fe cation. Residues 345-348 (KFLV) and 350-351 (FE) each bind UDP-alpha-D-glucose.

Belongs to the galactose-1-phosphate uridylyltransferase type 1 family. As to quaternary structure, homodimer. Requires Zn(2+) as cofactor.

The enzyme catalyses alpha-D-galactose 1-phosphate + UDP-alpha-D-glucose = alpha-D-glucose 1-phosphate + UDP-alpha-D-galactose. Its pathway is carbohydrate metabolism; galactose metabolism. Its function is as follows. Essential for growth on galactose but not for cellulase induction. This is Galactose-1-phosphate uridylyltransferase (gal7) from Hypocrea jecorina (Trichoderma reesei).